A 174-amino-acid chain; its full sequence is ATP synthase subunit delta, sodium ion specific (174 aa).

The protein belongs to the ATPase delta chain family. As to quaternary structure, F-type ATPases have 2 components, F(1) - the catalytic core - and F(0) - the membrane proton channel. F(1) has five subunits: alpha(3), beta(3), gamma(1), delta(1), epsilon(1). F(0) has three main subunits: a(1), b(2) and c(10-14). The alpha and beta chains form an alternating ring which encloses part of the gamma chain. F(1) is attached to F(0) by a central stalk formed by the gamma and epsilon chains, while a peripheral stalk is formed by the delta and b chains.

The protein resides in the cell inner membrane. Its function is as follows. F(1)F(0) ATP synthase produces ATP from ADP in the presence of a proton or sodium gradient. F-type ATPases consist of two structural domains, F(1) containing the extramembraneous catalytic core and F(0) containing the membrane proton channel, linked together by a central stalk and a peripheral stalk. During catalysis, ATP synthesis in the catalytic domain of F(1) is coupled via a rotary mechanism of the central stalk subunits to proton translocation. In terms of biological role, this protein is part of the stalk that links CF(0) to CF(1). It either transmits conformational changes from CF(0) to CF(1) or is implicated in proton conduction. This is ATP synthase subunit delta, sodium ion specific from Ilyobacter tartaricus.